Reading from the N-terminus, the 449-residue chain is Nucleoprotein (449 aa).

The interval 1–55 (MSFTPGKQSSSRASSGNRSGNGILKWADQSDQSRNVQTRGRRVQSKQTATSQQPS) is disordered. A compositionally biased stretch (low complexity) spans 9-22 (SSSRASSGNRSGNG). 2 stretches are compositionally biased toward polar residues: residues 29-38 (QSDQSRNVQT) and 45-55 (SKQTATSQQPS). Residues 52–194 (QQPSGGTVVP…GYYIEGSGRS (143 aa)) are RNA-binding. One can recognise a CoV N NTD domain in the interval 61–190 (PYYSWFSGIT…VLPQGYYIEG (130 aa)). Residues R106, R122, and R164 each contribute to the RNA site. Disordered stretches follow at residues 158–231 (PADI…VTPD), 266–297 (ILNK…NFGG), and 387–449 (MMNI…TSEI). The residue at position 167 (S167) is a Phosphoserine; by host. At T174 the chain carries Phosphothreonine; by host. A Phosphoserine; by host modification is found at S191. 2 stretches are compositionally biased toward polar residues: residues 194–204 (SAPNSRSTSRA) and 212–227 (GSRS…STPG). The CoV N CTD domain occupies 259-384 (AKEVRQKILN…QNLNAYQHQE (126 aa)). Residues 266–276 (ILNKPRQKRSP) are compositionally biased toward basic residues. Residues 266-385 (ILNKPRQKRS…NLNAYQHQED (120 aa)) are dimerization. Phosphoserine; by host is present on S391. The span at 400-410 (QKNGQVENDNV) shows a compositional bias: polar residues. A compositionally biased stretch (basic and acidic residues) spans 423–440 (KSRELTAEDISLLKKMDE). S424 is subject to Phosphoserine; by host. T428 carries the phosphothreonine; by host modification.

It belongs to the betacoronavirus nucleocapsid protein family. As to quaternary structure, homooligomer. Both monomeric and oligomeric forms interact with RNA. Interacts with protein M. Interacts with NSP3; this interaction serves to tether the genome to the newly translated replicase-transcriptase complex at a very early stage of infection. ADP-ribosylated. The ADP-ribosylation is retained in the virion during infection. Post-translationally, phosphorylated on serine and threonine residues.

It is found in the virion. The protein localises to the host endoplasmic reticulum-Golgi intermediate compartment. Its subcellular location is the host Golgi apparatus. Its function is as follows. Packages the positive strand viral genome RNA into a helical ribonucleocapsid (RNP) and plays a fundamental role during virion assembly through its interactions with the viral genome and membrane protein M. Plays an important role in enhancing the efficiency of subgenomic viral RNA transcription as well as viral replication. This Sus scrofa (Pig) protein is Nucleoprotein.